Reading from the N-terminus, the 373-residue chain is Mannitol-1-phosphate 5-dehydrogenase (373 aa).

Residue alanine 3–glycine 14 coordinates NAD(+).

It belongs to the mannitol dehydrogenase family.

It carries out the reaction D-mannitol 1-phosphate + NAD(+) = beta-D-fructose 6-phosphate + NADH + H(+). The protein is Mannitol-1-phosphate 5-dehydrogenase of Bacillus velezensis (strain DSM 23117 / BGSC 10A6 / LMG 26770 / FZB42) (Bacillus amyloliquefaciens subsp. plantarum).